We begin with the raw amino-acid sequence, 260 residues long: Hemin import ATP-binding protein HmuV (260 aa).

Residues 3–239 (LHAQQISLSI…QRLSEVYGCD (237 aa)) enclose the ABC transporter domain. ATP is bound at residue 35 to 42 (GPNGSGKS).

This sequence belongs to the ABC transporter superfamily. Heme (hemin) importer (TC 3.A.1.14.5) family. In terms of assembly, the complex is composed of two ATP-binding proteins (HmuV), two transmembrane proteins (HmuU) and a solute-binding protein (HmuT).

The protein resides in the cell inner membrane. Functionally, part of the ABC transporter complex HmuTUV involved in hemin import. Responsible for energy coupling to the transport system. The protein is Hemin import ATP-binding protein HmuV of Ruegeria sp. (strain TM1040) (Silicibacter sp.).